We begin with the raw amino-acid sequence, 304 residues long: N-acetylmuramic acid 6-phosphate etherase (304 aa).

The SIS domain maps to isoleucine 62–lysine 225. Residue glutamate 90 is the Proton donor of the active site. Residue glutamate 121 is part of the active site.

This sequence belongs to the GCKR-like family. MurNAc-6-P etherase subfamily. In terms of assembly, homodimer.

The catalysed reaction is N-acetyl-D-muramate 6-phosphate + H2O = N-acetyl-D-glucosamine 6-phosphate + (R)-lactate. It participates in amino-sugar metabolism; 1,6-anhydro-N-acetylmuramate degradation. Its pathway is amino-sugar metabolism; N-acetylmuramate degradation. The protein operates within cell wall biogenesis; peptidoglycan recycling. Its function is as follows. Specifically catalyzes the cleavage of the D-lactyl ether substituent of MurNAc 6-phosphate, producing GlcNAc 6-phosphate and D-lactate. Together with AnmK, is also required for the utilization of anhydro-N-acetylmuramic acid (anhMurNAc) either imported from the medium or derived from its own cell wall murein, and thus plays a role in cell wall recycling. This is N-acetylmuramic acid 6-phosphate etherase from Actinobacillus succinogenes (strain ATCC 55618 / DSM 22257 / CCUG 43843 / 130Z).